The primary structure comprises 603 residues: UvrABC system protein C (603 aa).

In terms of domain architecture, GIY-YIG spans Asp-15 to Ile-92. Residues Lys-197–Thr-232 enclose the UVR domain.

The protein belongs to the UvrC family. Interacts with UvrB in an incision complex.

It localises to the cytoplasm. Its function is as follows. The UvrABC repair system catalyzes the recognition and processing of DNA lesions. UvrC both incises the 5' and 3' sides of the lesion. The N-terminal half is responsible for the 3' incision and the C-terminal half is responsible for the 5' incision. The protein is UvrABC system protein C of Listeria innocua serovar 6a (strain ATCC BAA-680 / CLIP 11262).